Reading from the N-terminus, the 423-residue chain is Probable electron transfer flavoprotein-quinone oxidoreductase YgcN (423 aa).

7–21 serves as a coordination point for FAD; that stretch reads IIIIGAGIAGTACAL.

The protein belongs to the ETF-QO/FixC family. The cofactor is FAD.

Its function is as follows. Probably accepts electrons from YgcQ/YgcR and reduces a quinone. The chain is Probable electron transfer flavoprotein-quinone oxidoreductase YgcN (ygcN) from Escherichia coli (strain K12).